Consider the following 297-residue polypeptide: uncharacterized protein (297 aa).

Transmembrane regions (helical) follow at residues 3 to 23 (DYIYPIIAGVIAGIATRLYML), 38 to 58 (VIHIALGLIAAGLGAIIMPAL), 103 to 123 (IEGIAIAFESRNYIVIFTALL), and 128 to 148 (YVFLSIWAAVIAAVVCFLLAM).

It is found in the cell membrane. This is an uncharacterized protein from Bacillus subtilis (strain 168).